A 105-amino-acid chain; its full sequence is MPHRNDRRKSASKAPNAIIHGRVASKKTIKKQLRNGKYSLKRLAEKGIHLDDIAMEIDNASKKNISKDKSLNENLFGKTEAGKQKDFMNIEPTCKGTILGAPPAL.

Basic residues predominate over residues 1-11 (MPHRNDRRKSA). A disordered region spans residues 1 to 20 (MPHRNDRRKSASKAPNAIIH).

This sequence belongs to the ALB1 family.

It is found in the nucleus. It localises to the nucleolus. This is an uncharacterized protein from Schizosaccharomyces pombe (strain 972 / ATCC 24843) (Fission yeast).